A 440-amino-acid polypeptide reads, in one-letter code: tRNA(Ile)-lysidine synthase (440 aa).

Residue 29-34 (SGGLDS) participates in ATP binding.

Belongs to the tRNA(Ile)-lysidine synthase family.

It localises to the cytoplasm. The enzyme catalyses cytidine(34) in tRNA(Ile2) + L-lysine + ATP = lysidine(34) in tRNA(Ile2) + AMP + diphosphate + H(+). In terms of biological role, ligates lysine onto the cytidine present at position 34 of the AUA codon-specific tRNA(Ile) that contains the anticodon CAU, in an ATP-dependent manner. Cytidine is converted to lysidine, thus changing the amino acid specificity of the tRNA from methionine to isoleucine. This is tRNA(Ile)-lysidine synthase from Pectobacterium atrosepticum (strain SCRI 1043 / ATCC BAA-672) (Erwinia carotovora subsp. atroseptica).